Here is an 804-residue protein sequence, read N- to C-terminus: Leucine--tRNA ligase (804 aa).

Positions 40–51 (PYPSGAGLHVGH) match the 'HIGH' region motif. Positions 576 to 580 (KMSKS) match the 'KMSKS' region motif. Lys579 is an ATP binding site.

This sequence belongs to the class-I aminoacyl-tRNA synthetase family.

The protein localises to the cytoplasm. The catalysed reaction is tRNA(Leu) + L-leucine + ATP = L-leucyl-tRNA(Leu) + AMP + diphosphate. This chain is Leucine--tRNA ligase, found in Bacillus subtilis (strain 168).